The primary structure comprises 440 residues: Probable circularly permuted 1,3-beta-glucanase (440 aa).

The N-terminal stretch at 1-20 (MHYSLFFGAALAASVSTVSA) is a signal peptide. The segment covering 100-112 (GEKPKRELKPSIH) has biased composition (basic and acidic residues). Disordered stretches follow at residues 100-126 (GEKPKRELKPSIHERRHGHSHQRFHEK) and 153-195 (PAAP…VAPG). Basic residues predominate over residues 113–125 (ERRHGHSHQRFHE). Low complexity predominate over residues 153 to 164 (PAAPTSAPGAPG). A compositionally biased stretch (basic and acidic residues) spans 177-186 (GGDKPKDPKP). The ExDxxE motif motif lies at 350-355 (EFDVLE).

The protein belongs to the PGA52 family.

It localises to the secreted. The enzyme catalyses Hydrolysis of (1-&gt;3)-beta-D-glucosidic linkages in (1-&gt;3)-beta-D-glucans.. Functionally, probable circularly permuted 1,3-beta-glucanase involved in cell wall modification through beta-1,3-glucan network alterations such as increased branching or remodeling. This is Probable circularly permuted 1,3-beta-glucanase from Arthroderma benhamiae (strain ATCC MYA-4681 / CBS 112371) (Trichophyton mentagrophytes).